Here is a 293-residue protein sequence, read N- to C-terminus: Urease accessory protein UreD (293 aa).

The disordered stretch occupies residues 1-22 (MAVAQQAWSPGADPAPSAAPVS). Positions 7–22 (AWSPGADPAPSAAPVS) are enriched in low complexity.

It belongs to the UreD family. As to quaternary structure, ureD, UreF and UreG form a complex that acts as a GTP-hydrolysis-dependent molecular chaperone, activating the urease apoprotein by helping to assemble the nickel containing metallocenter of UreC. The UreE protein probably delivers the nickel.

Its subcellular location is the cytoplasm. Its function is as follows. Required for maturation of urease via the functional incorporation of the urease nickel metallocenter. The chain is Urease accessory protein UreD from Alkalilimnicola ehrlichii (strain ATCC BAA-1101 / DSM 17681 / MLHE-1).